The sequence spans 175 residues: Hypoxanthine-guanine phosphoribosyltransferase (175 aa).

Diphosphate is bound by residues lysine 40 and glycine 41. 2 residues coordinate Mg(2+): glutamate 96 and aspartate 97. Catalysis depends on aspartate 100, which acts as the Proton acceptor. GMP is bound by residues lysine 128, 149 to 150 (FL), and aspartate 156. Diphosphate is bound at residue arginine 162.

The protein belongs to the purine/pyrimidine phosphoribosyltransferase family. Requires Mg(2+) as cofactor.

Its subcellular location is the cytoplasm. The catalysed reaction is IMP + diphosphate = hypoxanthine + 5-phospho-alpha-D-ribose 1-diphosphate. It catalyses the reaction GMP + diphosphate = guanine + 5-phospho-alpha-D-ribose 1-diphosphate. It participates in purine metabolism; IMP biosynthesis via salvage pathway; IMP from hypoxanthine: step 1/1. The protein operates within purine metabolism; GMP biosynthesis via salvage pathway; GMP from guanine: step 1/1. Purine salvage pathway enzyme that catalyzes the transfer of the ribosyl-5-phosphate group from 5-phospho-alpha-D-ribose 1-diphosphate (PRPP) to the N9 position of the 6-oxopurines hypoxanthine and guanine to form the corresponding ribonucleotides IMP (inosine 5'-monophosphate) and GMP (guanosine 5'-monophosphate), with the release of PPi. In Mycoplasma pneumoniae (strain ATCC 29342 / M129 / Subtype 1) (Mycoplasmoides pneumoniae), this protein is Hypoxanthine-guanine phosphoribosyltransferase (hpt).